The primary structure comprises 448 residues: N-succinylarginine dihydrolase (448 aa).

Substrate is bound by residues 19 to 28 (GGLSYGNVAS), N110, and 137 to 138 (HR). E174 is an active-site residue. R214 contacts substrate. H250 is an active-site residue. Positions 252 and 365 each coordinate substrate. The active-site Nucleophile is C371.

Belongs to the succinylarginine dihydrolase family. Homodimer.

The catalysed reaction is N(2)-succinyl-L-arginine + 2 H2O + 2 H(+) = N(2)-succinyl-L-ornithine + 2 NH4(+) + CO2. Its pathway is amino-acid degradation; L-arginine degradation via AST pathway; L-glutamate and succinate from L-arginine: step 2/5. In terms of biological role, catalyzes the hydrolysis of N(2)-succinylarginine into N(2)-succinylornithine, ammonia and CO(2). The chain is N-succinylarginine dihydrolase from Pseudomonas fluorescens (strain ATCC BAA-477 / NRRL B-23932 / Pf-5).